The chain runs to 108 residues: Phosphoribosyl-AMP cyclohydrolase (108 aa).

Asp78 provides a ligand contact to Mg(2+). A Zn(2+)-binding site is contributed by Cys79. Residues Asp80 and Asp82 each coordinate Mg(2+). Zn(2+) is bound by residues Cys95 and Cys102.

It belongs to the PRA-CH family. Homodimer. It depends on Mg(2+) as a cofactor. Zn(2+) is required as a cofactor.

The protein localises to the cytoplasm. The catalysed reaction is 1-(5-phospho-beta-D-ribosyl)-5'-AMP + H2O = 1-(5-phospho-beta-D-ribosyl)-5-[(5-phospho-beta-D-ribosylamino)methylideneamino]imidazole-4-carboxamide. Its pathway is amino-acid biosynthesis; L-histidine biosynthesis; L-histidine from 5-phospho-alpha-D-ribose 1-diphosphate: step 3/9. Functionally, catalyzes the hydrolysis of the adenine ring of phosphoribosyl-AMP. The polypeptide is Phosphoribosyl-AMP cyclohydrolase (Nitrosopumilus maritimus (strain SCM1)).